The chain runs to 391 residues: Isochorismate synthase EntC (391 aa).

Thr-140, Thr-142, Val-145, and Asp-146 together coordinate Mg(2+). The active-site Proton acceptor is Lys-147. Glu-197 functions as the Proton donor in the catalytic mechanism. Residues Gly-214, Ser-215, Glu-241, Ala-303, Arg-347, and Gly-361 each coordinate isochorismate. Residue Glu-241 participates in Mg(2+) binding. Glu-376 is a binding site for Mg(2+). Lys-380 is an isochorismate binding site.

The protein belongs to the isochorismate synthase family. As to quaternary structure, monomer. Forms a specific pairwise interaction with EntB; this interaction likely facilitates substrate channeling to connect the EntB and EntC active sites. It depends on Mg(2+) as a cofactor.

It carries out the reaction chorismate = isochorismate. Its pathway is siderophore biosynthesis; enterobactin biosynthesis. Its function is as follows. Involved in the biosynthesis of the siderophore enterobactin (macrocyclic trimeric lactone of N-(2,3-dihydroxybenzoyl)-serine). Catalyzes the reversible conversion of chorismate to isochorismate. This chain is Isochorismate synthase EntC, found in Escherichia coli O157:H7.